A 281-amino-acid chain; its full sequence is Phosphatidylglycerol--prolipoprotein diacylglyceryl transferase (281 aa).

3 helical membrane-spanning segments follow: residues 11 to 31, 57 to 77, and 89 to 109; these read IIFT…VISF, LLYS…IIFY, and VFYI…AIIV. Arg-140 contributes to the a 1,2-diacyl-sn-glycero-3-phospho-(1'-sn-glycerol) binding site. Transmembrane regions (helical) follow at residues 194–214, 222–242, and 255–275; these read PTQL…IYFF, GSIS…IEFF, and IITM…IIMY.

Belongs to the Lgt family.

The protein resides in the cell inner membrane. The enzyme catalyses L-cysteinyl-[prolipoprotein] + a 1,2-diacyl-sn-glycero-3-phospho-(1'-sn-glycerol) = an S-1,2-diacyl-sn-glyceryl-L-cysteinyl-[prolipoprotein] + sn-glycerol 1-phosphate + H(+). It functions in the pathway protein modification; lipoprotein biosynthesis (diacylglyceryl transfer). Functionally, catalyzes the transfer of the diacylglyceryl group from phosphatidylglycerol to the sulfhydryl group of the N-terminal cysteine of a prolipoprotein, the first step in the formation of mature lipoproteins. This is Phosphatidylglycerol--prolipoprotein diacylglyceryl transferase from Buchnera aphidicola subsp. Acyrthosiphon pisum (strain APS) (Acyrthosiphon pisum symbiotic bacterium).